Consider the following 84-residue polypeptide: Large ribosomal subunit protein bL27 (84 aa).

Positions 1 to 20 (MAHKKAGGSTRNGRDSHSKR) are disordered.

This sequence belongs to the bacterial ribosomal protein bL27 family.

This is Large ribosomal subunit protein bL27 from Blochmanniella pennsylvanica (strain BPEN).